The sequence spans 237 residues: Urease accessory protein UreF (237 aa).

The protein belongs to the UreF family. In terms of assembly, ureD, UreF and UreG form a complex that acts as a GTP-hydrolysis-dependent molecular chaperone, activating the urease apoprotein by helping to assemble the nickel containing metallocenter of UreC. The UreE protein probably delivers the nickel.

It is found in the cytoplasm. Required for maturation of urease via the functional incorporation of the urease nickel metallocenter. The polypeptide is Urease accessory protein UreF (Streptococcus salivarius (strain 57.I)).